The primary structure comprises 499 residues: tRNA (guanine(37)-N(1))-methyltransferase (499 aa).

Residues 1–44 constitute a mitochondrion transit peptide; sequence MKIALPVFQKFNRLISSCKMSGVFPYNPPVNRQMRELDRSFFIT. Residues H268, 307–308, 335–336, and N399 contribute to the S-adenosyl-L-methionine site; these read DL and DG.

It belongs to the class I-like SAM-binding methyltransferase superfamily. TRM5/TYW2 family. In terms of assembly, monomer.

It is found in the mitochondrion matrix. Its subcellular location is the nucleus. The protein resides in the cytoplasm. The catalysed reaction is guanosine(37) in tRNA + S-adenosyl-L-methionine = N(1)-methylguanosine(37) in tRNA + S-adenosyl-L-homocysteine + H(+). Its function is as follows. Specifically methylates the N1 position of guanosine-37 in various cytoplasmic and mitochondrial tRNAs. Methylation is not dependent on the nature of the nucleoside 5' of the target nucleoside. This is the first step in the biosynthesis of wybutosine (yW), a modified base adjacent to the anticodon of tRNAs and required for accurate decoding. Postspliced cytoplasmic tRNAs are imported into the nucleus, where this first step seems to take place, after which they are reexported to the cytoplasm, where the yW sythesis is completed by cytoplasmic enzymes. The chain is tRNA (guanine(37)-N(1))-methyltransferase from Saccharomyces cerevisiae (strain ATCC 204508 / S288c) (Baker's yeast).